We begin with the raw amino-acid sequence, 302 residues long: Nucleotide-binding protein Bcenmc03_2806 (302 aa).

8–15 (GISGSGKS) is a binding site for ATP. 57–60 (DARS) contributes to the GTP binding site.

Belongs to the RapZ-like family.

Its function is as follows. Displays ATPase and GTPase activities. This is Nucleotide-binding protein Bcenmc03_2806 from Burkholderia orbicola (strain MC0-3).